The chain runs to 683 residues: Elongation factor G 2 (683 aa).

Residues 4 to 279 (QQMRNIGIMA…AVVEYLPAPQ (276 aa)) form the tr-type G domain. GTP contacts are provided by residues 13 to 20 (AHVDAGKT), 77 to 81 (DTPGH), and 131 to 134 (NKMD).

Belongs to the TRAFAC class translation factor GTPase superfamily. Classic translation factor GTPase family. EF-G/EF-2 subfamily.

It is found in the cytoplasm. Functionally, catalyzes the GTP-dependent ribosomal translocation step during translation elongation. During this step, the ribosome changes from the pre-translocational (PRE) to the post-translocational (POST) state as the newly formed A-site-bound peptidyl-tRNA and P-site-bound deacylated tRNA move to the P and E sites, respectively. Catalyzes the coordinated movement of the two tRNA molecules, the mRNA and conformational changes in the ribosome. The chain is Elongation factor G 2 (fusB) from Treponema pallidum (strain Nichols).